A 242-amino-acid chain; its full sequence is MKIWCAVCDKEEASVFCCADEAALCNGCDRHVHFANKLAGKHLRFSLTSPTFKDAPLCDICGERRALLFCQEDRAILCRECDIPIHQANEHTKKHNRFLLTGVKISASPSAYPRASNSNSAAAFGRAKTRPKSVSSEVPSSASNEVFTSSSSTTTSNCYYGIEENYHHVSDSGSGSGCTGSISEYLMETLPGWRVEDLLEHPSCVSYEDNIITNNNNSESYRVYDGSSQFHHQGFWDHKPFS.

Residues Cys-5, Cys-8, Cys-28, His-33, Cys-58, Cys-61, Cys-81, and His-91 each coordinate Zn(2+). The B box-type 1; atypical zinc-finger motif lies at 5 to 47; sequence CAVCDKEEASVFCCADEAALCNGCDRHVHFANKLAGKHLRFSL. The B box-type 2; atypical zinc-finger motif lies at 58–100; the sequence is CDICGERRALLFCQEDRAILCRECDIPIHQANEHTKKHNRFLL. Positions 112–153 are disordered; sequence YPRASNSNSAAAFGRAKTRPKSVSSEVPSSASNEVFTSSSST. Residues 133-153 are compositionally biased toward low complexity; that stretch reads SVSSEVPSSASNEVFTSSSST.

As to quaternary structure, interacts with MED25 and COP1. In terms of processing, COP1-mediated ubiquitination and subsequent proteasomal degradation of BBX20 occurs in the dark.

The protein resides in the nucleus. In terms of biological role, acts as a positive regulator of seedling photomorphogenesis. Plays a negative role in brassinosteroid responses. The protein is B-box zinc finger protein 20 of Arabidopsis thaliana (Mouse-ear cress).